The chain runs to 54 residues: MVGTCPECGAELRLENPELGELVVCEDCGAELEVVGLDPLRLEPAPEEAEDWGE.

A TFIIB-type zinc finger spans residues 1 to 33 (MVGTCPECGAELRLENPELGELVVCEDCGAELE). Residues Cys5, Cys8, Cys25, and Cys28 each coordinate Fe cation. A short sequence motif (EDWGE) is located at residue Glu50. At Glu54 the chain carries 5-glutamyl 2-aminoadipic acid; alternate. Glu54 is modified (5-glutamyl N2-lysine; alternate).

Post-translationally, formation of an isopeptide bond between the gamma-carboxyl group of the C-terminal glutamate and the amino group of alpha-aminoadipate (AAA) is catalyzed by LysX. The bound AAA is then converted to L-lysine in a series of reactions catalyzed by LysZ, LysY and LysJ. Release of the product L-lysine is catalyzed by LysK.

Its pathway is amino-acid biosynthesis; L-lysine biosynthesis via AAA pathway. Carrier protein that bears the covalently bound substrates for lysine biosynthesis; the bound alpha-aminoadipate (AAA) is sequentially converted to L-lysine. The sequence is that of Alpha-aminoadipate carrier protein LysW (lysW) from Thermus thermophilus (strain ATCC 27634 / DSM 579 / HB8).